We begin with the raw amino-acid sequence, 83 residues long: Apolipoprotein C-I, basic form (83 aa).

Residues 1–26 (MRLFLSLPVLVVVLSIVLEGPAPAQG) form the signal peptide.

The protein belongs to the apolipoprotein C1 family.

The protein resides in the secreted. Its function is as follows. Inhibitor of lipoprotein binding to the low density lipoprotein (LDL) receptor, LDL receptor-related protein, and very low density lipoprotein (VLDL) receptor. Associates with high density lipoproteins (HDL) and the triacylglycerol-rich lipoproteins in the plasma and makes up about 10% of the protein of the VLDL and 2% of that of HDL. Appears to interfere directly with fatty acid uptake and is also the major plasma inhibitor of cholesteryl ester transfer protein (CETP). Binds free fatty acids and reduces their intracellular esterification. Modulates the interaction of APOE with beta-migrating VLDL and inhibits binding of beta-VLDL to the LDL receptor-related protein. This Pan troglodytes (Chimpanzee) protein is Apolipoprotein C-I, basic form (APOC1B).